Consider the following 238-residue polypeptide: Single-stranded DNA-binding protein WHY2, mitochondrial (238 aa).

The transit peptide at 1-29 (MMKQARSLLSRSLCDQSKSLFEASTLRGF) directs the protein to the mitochondrion. Residues 62–67 (KGKAAL) form a required for ssDNA binding region.

The protein belongs to the Whirly family. Homotetramer.

The protein localises to the mitochondrion. Single-stranded DNA-binding protein that associates with mitochondrial DNA and may play a role in the regulation of the gene expression machinery. Also seems to be required to prevent break-induced DNA rearrangements in the mitochondrial genome. Can bind to melt double-stranded DNA in vivo. The chain is Single-stranded DNA-binding protein WHY2, mitochondrial (WHY2) from Arabidopsis thaliana (Mouse-ear cress).